A 529-amino-acid chain; its full sequence is Probable anion transporter 1, chloroplastic (529 aa).

The transit peptide at 1–55 directs the protein to the chloroplast; it reads MLYLLPLSVSCRVPGSPPAPRSRRFLDPGGGRGVGDGLGGVRVFRRRALRGTDVR. Disordered stretches follow at residues 13 to 39 and 52 to 78; these read VPGS…DGLG and TDVR…GGYG. Residues 28 to 39 are compositionally biased toward gly residues; the sequence is PGGGRGVGDGLG. A compositionally biased stretch (basic and acidic residues) spans 67–76; that stretch reads RHDDARHDGG. The next 11 membrane-spanning stretches (helical) occupy residues 120–140, 158–178, 187–207, 209–229, 251–271, 274–294, 340–360, 378–398, 418–438, 469–489, and 503–523; these read WAIV…RVNM, VGLI…AGGI, TVLG…PFAA, LGLP…GVAM, LVYS…PLLI, FGWP…FSTW, VWAL…LLTW, LFCV…GWIA, IGFL…SPAM, AGVL…FGTA, and VFKV…LFST.

Belongs to the major facilitator superfamily. Sodium/anion cotransporter (TC 2.A.1.14) family.

It localises to the plastid. The protein resides in the chloroplast membrane. Functionally, probable anion transporter. The chain is Probable anion transporter 1, chloroplastic (PHT4;1) from Oryza sativa subsp. japonica (Rice).